Here is a 51-residue protein sequence, read N- to C-terminus: Large ribosomal subunit protein bL33 (51 aa).

It belongs to the bacterial ribosomal protein bL33 family.

The protein is Large ribosomal subunit protein bL33 of Marinobacter nauticus (strain ATCC 700491 / DSM 11845 / VT8) (Marinobacter aquaeolei).